The primary structure comprises 221 residues: Protein GrpE 1 (221 aa).

2 disordered regions span residues 1–44 (MTEE…AAAQ) and 192–221 (VAEP…PEEG). Low complexity predominate over residues 26-44 (KAAPSEGAAPAGDAAAAAQ). Over residues 203-221 (KADEAEAADDKESGGPEEG) the composition is skewed to basic and acidic residues.

This sequence belongs to the GrpE family. Homodimer.

It localises to the cytoplasm. Functionally, participates actively in the response to hyperosmotic and heat shock by preventing the aggregation of stress-denatured proteins, in association with DnaK and GrpE. It is the nucleotide exchange factor for DnaK and may function as a thermosensor. Unfolded proteins bind initially to DnaJ; upon interaction with the DnaJ-bound protein, DnaK hydrolyzes its bound ATP, resulting in the formation of a stable complex. GrpE releases ADP from DnaK; ATP binding to DnaK triggers the release of the substrate protein, thus completing the reaction cycle. Several rounds of ATP-dependent interactions between DnaJ, DnaK and GrpE are required for fully efficient folding. This Streptomyces avermitilis (strain ATCC 31267 / DSM 46492 / JCM 5070 / NBRC 14893 / NCIMB 12804 / NRRL 8165 / MA-4680) protein is Protein GrpE 1.